The sequence spans 805 residues: Transmembrane channel-like protein 6 (805 aa).

A disordered region spans residues 1–29 (MAQPLAFILDVPETPGDQGQGPSPYDESE). Residues 1 to 209 (MAQPLAFILD…SCCGRLRYAC (209 aa)) are Lumenal-facing. Residue Thr-89 is modified to Phosphothreonine. Arg-94 is modified (omega-N-methylarginine). Asn-103 is a glycosylation site (N-linked (GlcNAc...) asparagine). The residue at position 105 (Thr-105) is a Phosphothreonine. Residues 210–230 (VLALHSLGLALLSALQALMPW) traverse the membrane as a helical segment. The Cytoplasmic segment spans residues 231–249 (RYALKRIGGQFGSSVLSYF). The helical transmembrane segment at 250–270 (LFLKTLLAFNALLLLLLVAFI) threads the bilayer. The Lumenal segment spans residues 271–338 (MGPQVAFPPA…TPRVGGLPYN (68 aa)). Asn-312 is a glycosylation site (N-linked (GlcNAc...) asparagine). A helical transmembrane segment spans residues 339 to 359 (MPLAYLSTVGVSFFITCITLV). Residues 360–431 (YSMAHSFGES…RSVCGRLRQA (72 aa)) lie on the Cytoplasmic side of the membrane. The chain crosses the membrane as a helical span at residues 432-452 (AVLGLVWLLCLGTALGCAVAV). Residues 453-469 (HVFSEFMIQSPEAAGQE) are Lumenal-facing. A helical membrane pass occupies residues 470–490 (AVLLVLPLVVGLLNLGAPYLC). Topologically, residues 491-505 (RVLAALEPHDSPVLE) are cytoplasmic. A helical membrane pass occupies residues 506–526 (VYVAICRNLILKLAILGTLCY). At 527–553 (HWLGRRVGVLQGQCWEDFVGQELYRFL) the chain is on the lumenal side. A helical transmembrane segment spans residues 554-574 (VMDFVLMLLDTLFGELVWRII). The Cytoplasmic segment spans residues 575–604 (SEKKLKRRRKPEFDIARNVLELIYGQTLTW). The chain crosses the membrane as a helical span at residues 605-625 (LGVLFSPLLPAVQIIKLLLVF). Over 626–650 (YVKKTSLLANCQAPRRPWLASHMST) the chain is Lumenal. Residues 651–671 (VFLTLLCFPAFLGAAVFLCYA) form a helical membrane-spanning segment. At 672 to 722 (VWQVKPSSTCGPFRTLDTMYEAGRVWVRHLEAAGPRVSWLPWVHRYLMENT) the chain is on the cytoplasmic side. A helical membrane pass occupies residues 723 to 743 (FFVFLVSALLLAVIYLNIQVV). The Lumenal segment spans residues 744–805 (RGQRKVICLL…PALLTDEQDA (62 aa)). Residues 778 to 805 (KEREERSRVGTTEEAAAPPALLTDEQDA) form a disordered region.

This sequence belongs to the TMC family. As to quaternary structure, interacts with TMC8. Interacts and forms a complex with TMC8 and CIB1; the interaction stabilizes each component of the complex. Interacts and forms a complex with TMC8 and SLC30A1/ZNT1; the interaction regulates zinc transport into the ER. (Microbial infection) Interacts with human papillomavirus 16/HPV16 protein E5; the interaction alleviates TMC6-mediated transcription factors inhibition. In terms of tissue distribution, expressed in placenta, prostate, testis, activated T-lymphocytes and lymphokine-activated killer (LAK) lymphocytes.

The protein localises to the endoplasmic reticulum membrane. It localises to the golgi apparatus membrane. The protein resides in the nucleus membrane. In terms of biological role, acts as a regulatory protein involved in the regulation of numerous cellular processes. Together with its homolog TMC8/EVER2, forms a complex with CIB1 in lymphocytes and keratynocytes where TMC6 and TMC8 stabilize CIB1 and reciprocally. Together with TMC8, also forms a complex with and activates zinc transporter ZNT1 at the ER membrane of keratynocytes, thereby facilitating zinc uptake into the ER. Down-regulates the activity of transcription factors induced by zinc and cytokines. Also plays a role in thermal sensation by inhibiting the M-channel (KCNQ2-KCNQ3 channel) current in primary sensory neurons. This chain is Transmembrane channel-like protein 6, found in Homo sapiens (Human).